A 193-amino-acid polypeptide reads, in one-letter code: Dephospho-CoA kinase (193 aa).

One can recognise a DPCK domain in the interval 5–193 (IIGLTGGIAS…KKVERFCETI (189 aa)). 13–18 (ASGKST) lines the ATP pocket.

This sequence belongs to the CoaE family.

The protein localises to the cytoplasm. It catalyses the reaction 3'-dephospho-CoA + ATP = ADP + CoA + H(+). It functions in the pathway cofactor biosynthesis; coenzyme A biosynthesis; CoA from (R)-pantothenate: step 5/5. In terms of biological role, catalyzes the phosphorylation of the 3'-hydroxyl group of dephosphocoenzyme A to form coenzyme A. This chain is Dephospho-CoA kinase, found in Fusobacterium nucleatum subsp. nucleatum (strain ATCC 25586 / DSM 15643 / BCRC 10681 / CIP 101130 / JCM 8532 / KCTC 2640 / LMG 13131 / VPI 4355).